The sequence spans 482 residues: ATP synthase subunit beta (482 aa).

168 to 175 (GGAGVGKT) serves as a coordination point for ATP.

Belongs to the ATPase alpha/beta chains family. As to quaternary structure, F-type ATPases have 2 components, CF(1) - the catalytic core - and CF(0) - the membrane proton channel. CF(1) has five subunits: alpha(3), beta(3), gamma(1), delta(1), epsilon(1). CF(0) has three main subunits: a(1), b(2) and c(9-12). The alpha and beta chains form an alternating ring which encloses part of the gamma chain. CF(1) is attached to CF(0) by a central stalk formed by the gamma and epsilon chains, while a peripheral stalk is formed by the delta and b chains.

It localises to the cell membrane. The catalysed reaction is ATP + H2O + 4 H(+)(in) = ADP + phosphate + 5 H(+)(out). In terms of biological role, produces ATP from ADP in the presence of a proton gradient across the membrane. The catalytic sites are hosted primarily by the beta subunits. This chain is ATP synthase subunit beta, found in Corynebacterium urealyticum (strain ATCC 43042 / DSM 7109).